A 359-amino-acid polypeptide reads, in one-letter code: Ornithine cyclodeaminase (359 aa).

The L-ornithine site is built by Arg53 and Lys77. NAD(+)-binding positions include Thr92, Arg120, 147–148, Asp169, Thr209, 232–235, Lys239, and Ser300; these read AQ and VGGD. Arg120 serves as a coordination point for L-ornithine. L-ornithine is bound at residue Asp235. Asp235 (proton donor/acceptor) is an active-site residue. Val301 contacts L-ornithine.

Belongs to the ornithine cyclodeaminase/mu-crystallin family. NAD(+) serves as cofactor.

The enzyme catalyses L-ornithine = L-proline + NH4(+). It participates in amino-acid biosynthesis; L-proline biosynthesis; L-proline from L-ornithine: step 1/1. Catalyzes the conversion of L-ornithine into L-proline with release of ammonia. This chain is Ornithine cyclodeaminase, found in Brucella melitensis biotype 1 (strain ATCC 23456 / CCUG 17765 / NCTC 10094 / 16M).